A 310-amino-acid chain; its full sequence is Methionyl-tRNA formyltransferase (310 aa).

Residue 109 to 112 (SLLP) participates in (6S)-5,6,7,8-tetrahydrofolate binding.

It belongs to the Fmt family.

The catalysed reaction is L-methionyl-tRNA(fMet) + (6R)-10-formyltetrahydrofolate = N-formyl-L-methionyl-tRNA(fMet) + (6S)-5,6,7,8-tetrahydrofolate + H(+). Functionally, attaches a formyl group to the free amino group of methionyl-tRNA(fMet). The formyl group appears to play a dual role in the initiator identity of N-formylmethionyl-tRNA by promoting its recognition by IF2 and preventing the misappropriation of this tRNA by the elongation apparatus. In Staphylococcus epidermidis (strain ATCC 12228 / FDA PCI 1200), this protein is Methionyl-tRNA formyltransferase.